A 211-amino-acid chain; its full sequence is Protein-L-isoaspartate O-methyltransferase (211 aa).

Residue Ser-60 is part of the active site.

The protein belongs to the methyltransferase superfamily. L-isoaspartyl/D-aspartyl protein methyltransferase family.

It is found in the cytoplasm. The enzyme catalyses [protein]-L-isoaspartate + S-adenosyl-L-methionine = [protein]-L-isoaspartate alpha-methyl ester + S-adenosyl-L-homocysteine. Its function is as follows. Catalyzes the methyl esterification of L-isoaspartyl residues in peptides and proteins that result from spontaneous decomposition of normal L-aspartyl and L-asparaginyl residues. It plays a role in the repair and/or degradation of damaged proteins. This chain is Protein-L-isoaspartate O-methyltransferase, found in Ectopseudomonas mendocina (strain ymp) (Pseudomonas mendocina).